Reading from the N-terminus, the 543-residue chain is Zinc finger protein tra-4 (543 aa).

The interval 1 to 38 (MDDPNQCTIKQEDSITRPRPTEAPTIQNLKQEPAIEEG) is disordered. A compositionally biased stretch (basic and acidic residues) spans 10 to 20 (KQEDSITRPRP). C2H2-type zinc fingers lie at residues 218–241 (VRCK…RDKH), 327–350 (PQCP…AKKH), 381–406 (YVCF…KKFH), 413–436 (FRCS…KMSH), 442–464 (FQCH…ERMH), 470–493 (FECK…RDEH), and 495–518 (YVCA…YEEH).

This sequence belongs to the krueppel C2H2-type zinc-finger protein family. Interacts with histone deacetylase hda-1. May interact with nasp-1.

It is found in the nucleus. Its function is as follows. Probable transcription factor. Promotes normal hermaphrodite (XX) development, in concert with histone deacetylase hda-1 and nasp-1, perhaps as components of a complex. May cooperate with transcription factor tra-1 to repress male-specific genes in hermaphrodites. Synthetic multivulva (synMuv) class B protein, required to repress the induction of vulval development by let-60 Ras signaling. The polypeptide is Zinc finger protein tra-4 (Caenorhabditis elegans).